Consider the following 741-residue polypeptide: Catalase-peroxidase 2 (741 aa).

Positions M1–A28 are cleaved as a signal peptide. The segment at residues W107–Y228 is a cross-link (tryptophyl-tyrosyl-methioninium (Trp-Tyr) (with M-254)). H108 serves as the catalytic Proton acceptor. The tryptophyl-tyrosyl-methioninium (Tyr-Met) (with W-107) cross-link spans Y228–M254. Residue H269 participates in heme b binding.

The protein belongs to the peroxidase family. Peroxidase/catalase subfamily. As to quaternary structure, homodimer or homotetramer. It depends on heme b as a cofactor. In terms of processing, formation of the three residue Trp-Tyr-Met cross-link is important for the catalase, but not the peroxidase activity of the enzyme.

The catalysed reaction is H2O2 + AH2 = A + 2 H2O. It carries out the reaction 2 H2O2 = O2 + 2 H2O. Bifunctional enzyme with both catalase and broad-spectrum peroxidase activity. This is Catalase-peroxidase 2 from Burkholderia ambifaria (strain ATCC BAA-244 / DSM 16087 / CCUG 44356 / LMG 19182 / AMMD) (Burkholderia cepacia (strain AMMD)).